We begin with the raw amino-acid sequence, 223 residues long: Ubiquitin carboxyl-terminal hydrolase isozyme L1 (223 aa).

Met-1 is modified (N-acetylmethionine). Residues 2–221 (QLKPMEINPE…VRFSAVALCK (220 aa)) enclose the UCH catalytic domain. The tract at residues 5-10 (PMEINP) is interaction with ubiquitin. The Nucleophile role is filled by Cys-90. Ser-125 bears the Phosphoserine mark. Catalysis depends on His-161, which acts as the Proton donor. The interaction with ubiquitin stretch occupies residues 211–216 (EVRFSA). Cys-220 carries S-farnesyl cysteine lipidation. A propeptide spans 221–223 (KAA) (removed in mature form).

The protein belongs to the peptidase C12 family. In terms of assembly, monomer. Homodimer. Interacts with COPS5 and SNCA. In terms of processing, O-glycosylated.

It is found in the cytoplasm. The protein localises to the endoplasmic reticulum membrane. The enzyme catalyses Thiol-dependent hydrolysis of ester, thioester, amide, peptide and isopeptide bonds formed by the C-terminal Gly of ubiquitin (a 76-residue protein attached to proteins as an intracellular targeting signal).. Ubiquitin-protein hydrolase involved both in the processing of ubiquitin precursors and of ubiquitinated proteins. This enzyme is a thiol protease that recognizes and hydrolyzes a peptide bond at the C-terminal glycine of ubiquitin. Also binds to free monoubiquitin and may prevent its degradation in lysosomes. The homodimer may have ATP-independent ubiquitin ligase activity. The sequence is that of Ubiquitin carboxyl-terminal hydrolase isozyme L1 (UCHL1) from Equus caballus (Horse).